The primary structure comprises 290 residues: Pyridoxal kinase PdxY (290 aa).

Substrate is bound by residues Ser12 and 47 to 48 (TQ). ATP contacts are provided by residues Asp114, Glu151, Lys184, and 211 to 214 (RPLL). Asp225 is a substrate binding site.

The protein belongs to the pyridoxine kinase family. PdxY subfamily. Homodimer. It depends on Mg(2+) as a cofactor.

It carries out the reaction pyridoxal + ATP = pyridoxal 5'-phosphate + ADP + H(+). It participates in cofactor metabolism; pyridoxal 5'-phosphate salvage; pyridoxal 5'-phosphate from pyridoxal: step 1/1. Pyridoxal kinase involved in the salvage pathway of pyridoxal 5'-phosphate (PLP). Catalyzes the phosphorylation of pyridoxal to PLP. The polypeptide is Pyridoxal kinase PdxY (Pseudomonas fluorescens (strain ATCC BAA-477 / NRRL B-23932 / Pf-5)).